Reading from the N-terminus, the 243-residue chain is Uridylate kinase (243 aa).

Residue K15 to G18 participates in ATP binding. Residue G57 participates in UMP binding. ATP-binding residues include G58 and R62. UMP-binding positions include D77 and T138–T145. Residues T165, F171, and D174 each contribute to the ATP site.

It belongs to the UMP kinase family. As to quaternary structure, homohexamer.

The protein resides in the cytoplasm. The catalysed reaction is UMP + ATP = UDP + ADP. The protein operates within pyrimidine metabolism; CTP biosynthesis via de novo pathway; UDP from UMP (UMPK route): step 1/1. Inhibited by UTP. In terms of biological role, catalyzes the reversible phosphorylation of UMP to UDP. In Blochmanniella floridana, this protein is Uridylate kinase.